A 467-amino-acid polypeptide reads, in one-letter code: Glutamate--tRNA ligase (467 aa).

The 'HIGH' region motif lies at 10–20 (PSPTGYLHVGG). The 'KMSKS' region motif lies at 238 to 242 (RLSKR). Lys-241 contacts ATP.

This sequence belongs to the class-I aminoacyl-tRNA synthetase family. Glutamate--tRNA ligase type 1 subfamily. In terms of assembly, monomer.

Its subcellular location is the cytoplasm. It catalyses the reaction tRNA(Glu) + L-glutamate + ATP = L-glutamyl-tRNA(Glu) + AMP + diphosphate. Catalyzes the attachment of glutamate to tRNA(Glu) in a two-step reaction: glutamate is first activated by ATP to form Glu-AMP and then transferred to the acceptor end of tRNA(Glu). This chain is Glutamate--tRNA ligase, found in Citrifermentans bemidjiense (strain ATCC BAA-1014 / DSM 16622 / JCM 12645 / Bem) (Geobacter bemidjiensis).